A 1450-amino-acid polypeptide reads, in one-letter code: Sister chromatid cohesion protein PDS5 homolog (1450 aa).

3 disordered regions span residues 1-145, 680-707, and 1340-1450; these read MATR…KETK, VGGS…QQQQ, and LPPL…EVEN. Acidic residues predominate over residues 45-59; sequence DDGELDSDIDEEDES. The span at 77–138 shows a compositional bias: low complexity; sequence KTQQQPQKSI…TSSSSQQSTQ (62 aa). The stretch at 650–716 forms a coiled coil; sequence KQLFKKYLEE…QLQQPENDIE (67 aa). The segment covering 682 to 691 has biased composition (polar residues); sequence GSTTPTSKKS. Composition is skewed to low complexity over residues 692-707 and 1350-1363; these read QPPQ…QQQQ and NNNN…STNN. Positions 1369-1378 are enriched in basic and acidic residues; sequence DENNNNKNDN. The segment covering 1387-1401 has biased composition (low complexity); the sequence is NSTTAVPQKSIISKP. Residues 1402–1427 show a composition bias toward basic residues; sequence PAKKVSKKAAAKQKSPKKKTNKKKKQ. A compositionally biased stretch (acidic residues) spans 1430 to 1450; the sequence is SEEEVSSSEEEDESQDEEVEN.

The protein belongs to the PDS5 family.

The protein localises to the nucleus. In terms of biological role, may regulate sister chromatid cohesion during mitosis and couple it to DNA replication. The chain is Sister chromatid cohesion protein PDS5 homolog from Dictyostelium discoideum (Social amoeba).